The primary structure comprises 95 residues: Co-chaperonin GroES (95 aa).

It belongs to the GroES chaperonin family. As to quaternary structure, heptamer of 7 subunits arranged in a ring. Interacts with the chaperonin GroEL.

It localises to the cytoplasm. In terms of biological role, together with the chaperonin GroEL, plays an essential role in assisting protein folding. The GroEL-GroES system forms a nano-cage that allows encapsulation of the non-native substrate proteins and provides a physical environment optimized to promote and accelerate protein folding. GroES binds to the apical surface of the GroEL ring, thereby capping the opening of the GroEL channel. The chain is Co-chaperonin GroES from Cereibacter sphaeroides (strain ATCC 17025 / ATH 2.4.3) (Rhodobacter sphaeroides).